The following is a 335-amino-acid chain: tRNA N6-adenosine threonylcarbamoyltransferase (335 aa).

2 residues coordinate Fe cation: histidine 112 and histidine 116. Residues 134–138, aspartate 167, glycine 180, and asparagine 273 contribute to the substrate site; that span reads VVSGG. Aspartate 301 contacts Fe cation.

The protein belongs to the KAE1 / TsaD family. Fe(2+) is required as a cofactor.

Its subcellular location is the cytoplasm. It carries out the reaction L-threonylcarbamoyladenylate + adenosine(37) in tRNA = N(6)-L-threonylcarbamoyladenosine(37) in tRNA + AMP + H(+). Functionally, required for the formation of a threonylcarbamoyl group on adenosine at position 37 (t(6)A37) in tRNAs that read codons beginning with adenine. Is involved in the transfer of the threonylcarbamoyl moiety of threonylcarbamoyl-AMP (TC-AMP) to the N6 group of A37, together with TsaE and TsaB. TsaD likely plays a direct catalytic role in this reaction. The sequence is that of tRNA N6-adenosine threonylcarbamoyltransferase from Shouchella clausii (strain KSM-K16) (Alkalihalobacillus clausii).